We begin with the raw amino-acid sequence, 180 residues long: Translation initiation factor IF-3 (180 aa).

It belongs to the IF-3 family. In terms of assembly, monomer.

It is found in the cytoplasm. IF-3 binds to the 30S ribosomal subunit and shifts the equilibrium between 70S ribosomes and their 50S and 30S subunits in favor of the free subunits, thus enhancing the availability of 30S subunits on which protein synthesis initiation begins. This is Translation initiation factor IF-3 from Mesoplasma florum (strain ATCC 33453 / NBRC 100688 / NCTC 11704 / L1) (Acholeplasma florum).